Here is a 139-residue protein sequence, read N- to C-terminus: D-ribose pyranase (139 aa).

Catalysis depends on H20, which acts as the Proton donor. Residues D28, H106, and Y128–N130 contribute to the substrate site.

The protein belongs to the RbsD / FucU family. RbsD subfamily. As to quaternary structure, homodecamer.

The protein resides in the cytoplasm. It catalyses the reaction beta-D-ribopyranose = beta-D-ribofuranose. The protein operates within carbohydrate metabolism; D-ribose degradation; D-ribose 5-phosphate from beta-D-ribopyranose: step 1/2. Functionally, catalyzes the interconversion of beta-pyran and beta-furan forms of D-ribose. The chain is D-ribose pyranase from Maridesulfovibrio salexigens (strain ATCC 14822 / DSM 2638 / NCIMB 8403 / VKM B-1763) (Desulfovibrio salexigens).